The sequence spans 544 residues: Chaperonin GroEL 1 (544 aa).

ATP contacts are provided by residues 30–33 (TLGP), 87–91 (DGTTT), Gly-415, 480–482 (NAA), and Asp-496.

It belongs to the chaperonin (HSP60) family. Forms a cylinder of 14 subunits composed of two heptameric rings stacked back-to-back. Interacts with the co-chaperonin GroES.

The protein localises to the cytoplasm. The enzyme catalyses ATP + H2O + a folded polypeptide = ADP + phosphate + an unfolded polypeptide.. Functionally, together with its co-chaperonin GroES, plays an essential role in assisting protein folding. The GroEL-GroES system forms a nano-cage that allows encapsulation of the non-native substrate proteins and provides a physical environment optimized to promote and accelerate protein folding. This chain is Chaperonin GroEL 1, found in Polaromonas naphthalenivorans (strain CJ2).